Here is a 568-residue protein sequence, read N- to C-terminus: Acetyl-coenzyme A carboxylase carboxyl transferase subunits beta/alpha (568 aa).

The tract at residues 1–253 (MAEPARTLAQ…QTAEYLRDAG (253 aa)) is acetyl-coenzyme A carboxylase carboxyl transferase subunit beta. A CoA carboxyltransferase N-terminal domain is found at 21–290 (RWTRCPNCRS…APAAERGYRT (270 aa)). Residues 21 to 536 (RWTRCPNCRS…AAALRASIGE (516 aa)) are carboxyltransferase. Residues Cys-25, Cys-28, Cys-44, and Cys-47 each coordinate Zn(2+). Residues 25-47 (CPNCRSLVYLRRLRRNGHVCPDC) form a C4-type zinc finger. The segment at 254-559 (MVDLVVPRHE…RRRFDRFGDP (306 aa)) is acetyl-coenzyme A carboxylase carboxyl transferase subunit alpha. Residues 286–536 (RGYRTRPRPA…AAALRASIGE (251 aa)) form the CoA carboxyltransferase C-terminal domain.

The protein in the N-terminal section; belongs to the AccD/PCCB family. This sequence in the C-terminal section; belongs to the AccA family. In terms of assembly, acetyl-CoA carboxylase is a heterotetramer composed of biotin carboxyl carrier protein (AccB), biotin carboxylase (AccC) and two subunits of ACCase subunit beta/alpha. It depends on Zn(2+) as a cofactor.

It localises to the cytoplasm. The catalysed reaction is N(6)-carboxybiotinyl-L-lysyl-[protein] + acetyl-CoA = N(6)-biotinyl-L-lysyl-[protein] + malonyl-CoA. The protein operates within lipid metabolism; malonyl-CoA biosynthesis; malonyl-CoA from acetyl-CoA: step 1/1. Functionally, component of the acetyl coenzyme A carboxylase (ACC) complex. Biotin carboxylase (BC) catalyzes the carboxylation of biotin on its carrier protein (BCCP) and then the CO(2) group is transferred by the transcarboxylase to acetyl-CoA to form malonyl-CoA. The sequence is that of Acetyl-coenzyme A carboxylase carboxyl transferase subunits beta/alpha (accD) from Saccharopolyspora erythraea (strain ATCC 11635 / DSM 40517 / JCM 4748 / NBRC 13426 / NCIMB 8594 / NRRL 2338).